Consider the following 130-residue polypeptide: Small ribosomal subunit protein uS11 (130 aa).

The protein belongs to the universal ribosomal protein uS11 family. Part of the 30S ribosomal subunit.

Its function is as follows. Located on the platform of the 30S subunit. The protein is Small ribosomal subunit protein uS11 of Nanoarchaeum equitans (strain Kin4-M).